The sequence spans 1058 residues: SIT4-associating protein SAP185 (1058 aa).

K20 participates in a covalent cross-link: Glycyl lysine isopeptide (Lys-Gly) (interchain with G-Cter in ubiquitin). 6 disordered regions span residues 34–71, 135–202, 513–556, 818–862, 873–892, and 934–992; these read TSTEAGKIDSNSTDESLESNSFKSEDEEEEYELPNREE, SEDR…ELEE, NSQN…TSID, CQEE…DQEQ, TKTRLNFNPDSDATEQVPGE, and ELSD…HDYD. The span at 42–55 shows a compositional bias: polar residues; sequence DSNSTDESLESNSF. 2 stretches are compositionally biased toward basic and acidic residues: residues 135–146 and 153–175; these read SEDRDLVRGEDK and ENAKADKKNIDGTFEEKERTRSG. Residues 176 to 189 are compositionally biased toward acidic residues; that stretch reads EEEELENEENDSAS. Residues 190–202 are compositionally biased toward basic and acidic residues; that stretch reads EDTRVTLPHELEE. 2 stretches are compositionally biased toward acidic residues: residues 528-546 and 820-837; these read ENEDDNTGDADDEVEDDTN and EEEEDEGEGYVSFDEDEP. Positions 838–861 are enriched in basic and acidic residues; the sequence is QEYRNGDSVRSKESNSSEGKRDQE. Residues 934-963 are compositionally biased toward polar residues; it reads ELSDGWESSPSNSIPKRASPSKNGMNSPMF. Basic and acidic residues predominate over residues 967-991; sequence FELHSPTDEFGGHKDEILSAEGHDY.

This sequence belongs to the SAPS family. In terms of processing, hyperphosphorylated in the absence of SIT4.

Its function is as follows. Associates with the SIT4 phosphatase in a cell cycle dependent manner. May be directly or indirectly involved in SIT4-dependent functions in budding and in normal G1 cyclin expression. The polypeptide is SIT4-associating protein SAP185 (SAP185) (Saccharomyces cerevisiae (strain ATCC 204508 / S288c) (Baker's yeast)).